We begin with the raw amino-acid sequence, 338 residues long: Ketol-acid reductoisomerase (NADP(+)) (338 aa).

The region spanning 1–181 is the KARI N-terminal Rossmann domain; the sequence is MKVYYENDAD…GGTKAGVIET (181 aa). NADP(+)-binding positions include 24–27, K47, S50, S52, and 82–85; these read FGSQ and DQVQ. The active site involves H107. G133 is a binding site for NADP(+). Residues 182-327 form the KARI C-terminal knotted domain; sequence NFKDETETDL…EKLRGMMSWL (146 aa). Mg(2+) contacts are provided by D190, E194, E226, and E230. S251 provides a ligand contact to substrate.

This sequence belongs to the ketol-acid reductoisomerase family. Mg(2+) is required as a cofactor.

It catalyses the reaction (2R)-2,3-dihydroxy-3-methylbutanoate + NADP(+) = (2S)-2-acetolactate + NADPH + H(+). The enzyme catalyses (2R,3R)-2,3-dihydroxy-3-methylpentanoate + NADP(+) = (S)-2-ethyl-2-hydroxy-3-oxobutanoate + NADPH + H(+). It functions in the pathway amino-acid biosynthesis; L-isoleucine biosynthesis; L-isoleucine from 2-oxobutanoate: step 2/4. The protein operates within amino-acid biosynthesis; L-valine biosynthesis; L-valine from pyruvate: step 2/4. Involved in the biosynthesis of branched-chain amino acids (BCAA). Catalyzes an alkyl-migration followed by a ketol-acid reduction of (S)-2-acetolactate (S2AL) to yield (R)-2,3-dihydroxy-isovalerate. In the isomerase reaction, S2AL is rearranged via a Mg-dependent methyl migration to produce 3-hydroxy-3-methyl-2-ketobutyrate (HMKB). In the reductase reaction, this 2-ketoacid undergoes a metal-dependent reduction by NADPH to yield (R)-2,3-dihydroxy-isovalerate. This Chloroherpeton thalassium (strain ATCC 35110 / GB-78) protein is Ketol-acid reductoisomerase (NADP(+)).